The chain runs to 617 residues: ATP-dependent RNA helicase DBP1 (617 aa).

Residues 1 to 90 (MADLPQKVSN…TSANYNRGGS (90 aa)) are disordered. Polar residues predominate over residues 7 to 17 (KVSNLSINNKE). Residues 38-58 (PSFERSTPKQEDKVTGGDFFR) show a composition bias toward basic and acidic residues. A compositionally biased stretch (polar residues) spans 79–90 (GGTSANYNRGGS). A Q motif motif is present at residues 154–182 (LDFSSPPLDELLMENIKLASFTKPTPVQK). Positions 185–374 (IPIVTKGRDL…RDFLDNYIFL (190 aa)) constitute a Helicase ATP-binding domain. 198 to 205 (AQTGSGKT) is an ATP binding site. The short motif at 318 to 321 (DEAD) is the DEAD box element. The Helicase C-terminal domain maps to 385-545 (NITQRILYVD…EVPTFLSDLS (161 aa)). Residues 542 to 617 (SDLSRQNSRG…GYGNSNASWW (76 aa)) are disordered. Residues 580–594 (FGSTRPRNTGTSNWG) show a composition bias toward polar residues.

The protein belongs to the DEAD box helicase family. DDX3/DED1 subfamily.

It is found in the cytoplasm. The enzyme catalyses ATP + H2O = ADP + phosphate + H(+). In terms of biological role, ATP-binding RNA helicase involved in translation initiation. Remodels RNA in response to ADP and ATP concentrations by facilitating disruption, but also formation of RNA duplexes. Redundant to DED1, may be required in conditions in which DED1 expression is decreased. The sequence is that of ATP-dependent RNA helicase DBP1 (DBP1) from Saccharomyces cerevisiae (strain ATCC 204508 / S288c) (Baker's yeast).